Here is a 402-residue protein sequence, read N- to C-terminus: S-adenosylmethionine synthase (402 aa).

Histidine 16 provides a ligand contact to ATP. Aspartate 18 lines the Mg(2+) pocket. Position 44 (glutamate 44) interacts with K(+). L-methionine-binding residues include glutamate 57 and glutamine 109. A flexible loop region spans residues 109-119 (QSAHIAQGVDA). ATP contacts are provided by residues 174–176 (DTK), aspartate 252, 258–259 (RK), alanine 275, and lysine 279. Aspartate 252 provides a ligand contact to L-methionine. Lysine 283 contributes to the L-methionine binding site.

The protein belongs to the AdoMet synthase family. Homotetramer; dimer of dimers. Requires Mg(2+) as cofactor. The cofactor is K(+).

It is found in the cytoplasm. It catalyses the reaction L-methionine + ATP + H2O = S-adenosyl-L-methionine + phosphate + diphosphate. It functions in the pathway amino-acid biosynthesis; S-adenosyl-L-methionine biosynthesis; S-adenosyl-L-methionine from L-methionine: step 1/1. Functionally, catalyzes the formation of S-adenosylmethionine (AdoMet) from methionine and ATP. The overall synthetic reaction is composed of two sequential steps, AdoMet formation and the subsequent tripolyphosphate hydrolysis which occurs prior to release of AdoMet from the enzyme. The sequence is that of S-adenosylmethionine synthase from Rhizorhabdus wittichii (strain DSM 6014 / CCUG 31198 / JCM 15750 / NBRC 105917 / EY 4224 / RW1) (Sphingomonas wittichii).